We begin with the raw amino-acid sequence, 194 residues long: 7-methyl-GTP pyrophosphatase (194 aa).

Asp69 serves as the catalytic Proton acceptor.

The protein belongs to the Maf family. YceF subfamily. Requires a divalent metal cation as cofactor.

It is found in the cytoplasm. The catalysed reaction is N(7)-methyl-GTP + H2O = N(7)-methyl-GMP + diphosphate + H(+). Nucleoside triphosphate pyrophosphatase that hydrolyzes 7-methyl-GTP (m(7)GTP). May have a dual role in cell division arrest and in preventing the incorporation of modified nucleotides into cellular nucleic acids. The protein is 7-methyl-GTP pyrophosphatase (yceF1) of Salmonella choleraesuis (strain SC-B67).